The chain runs to 276 residues: Thiazole synthase (276 aa).

K117 serves as the catalytic Schiff-base intermediate with DXP. 1-deoxy-D-xylulose 5-phosphate is bound by residues G178, 204-205 (AG), and 226-227 (NT).

The protein belongs to the ThiG family. As to quaternary structure, homotetramer. Forms heterodimers with either ThiH or ThiS.

It localises to the plastid. Its subcellular location is the chloroplast. It catalyses the reaction [ThiS sulfur-carrier protein]-C-terminal-Gly-aminoethanethioate + 2-iminoacetate + 1-deoxy-D-xylulose 5-phosphate = [ThiS sulfur-carrier protein]-C-terminal Gly-Gly + 2-[(2R,5Z)-2-carboxy-4-methylthiazol-5(2H)-ylidene]ethyl phosphate + 2 H2O + H(+). Its pathway is cofactor biosynthesis; thiamine diphosphate biosynthesis. Catalyzes the rearrangement of 1-deoxy-D-xylulose 5-phosphate (DXP) to produce the thiazole phosphate moiety of thiamine. Sulfur is provided by the thiocarboxylate moiety of the carrier protein ThiS. In vitro, sulfur can be provided by H(2)S. The chain is Thiazole synthase from Gracilaria tenuistipitata var. liui (Red alga).